The primary structure comprises 104 residues: MIYSTTETIPGREIAEIKGVVTGNVVQSKHIGRDLMAGLKSIVGGEIRGYTEMMTEARNIAIQRMVEDAANLGADAVVGIRFTTSSIVDGSSEILAFGTAVKLL.

It belongs to the UPF0145 family.

The chain is UPF0145 protein VIBHAR_02090 from Vibrio campbellii (strain ATCC BAA-1116).